Reading from the N-terminus, the 394-residue chain is Phosphoglycerate kinase (394 aa).

Residues 21–23, arginine 36, 59–62, arginine 113, and arginine 146 contribute to the substrate site; these read DLN and HLGR. ATP contacts are provided by residues lysine 197, glutamate 319, and 345-348; that span reads GGDT.

Belongs to the phosphoglycerate kinase family. In terms of assembly, monomer.

The protein localises to the cytoplasm. The catalysed reaction is (2R)-3-phosphoglycerate + ATP = (2R)-3-phospho-glyceroyl phosphate + ADP. The protein operates within carbohydrate degradation; glycolysis; pyruvate from D-glyceraldehyde 3-phosphate: step 2/5. This is Phosphoglycerate kinase from Halorhodospira halophila (strain DSM 244 / SL1) (Ectothiorhodospira halophila (strain DSM 244 / SL1)).